Consider the following 434-residue polypeptide: Enolase (434 aa).

Gln163 provides a ligand contact to (2R)-2-phosphoglycerate. Glu205 functions as the Proton donor in the catalytic mechanism. Mg(2+)-binding residues include Asp242, Glu291, and Asp318. Residues Lys343, Arg372, Ser373, and Lys394 each coordinate (2R)-2-phosphoglycerate. The Proton acceptor role is filled by Lys343.

It belongs to the enolase family. Requires Mg(2+) as cofactor.

It localises to the cytoplasm. It is found in the secreted. The protein resides in the cell surface. It carries out the reaction (2R)-2-phosphoglycerate = phosphoenolpyruvate + H2O. It functions in the pathway carbohydrate degradation; glycolysis; pyruvate from D-glyceraldehyde 3-phosphate: step 4/5. Its function is as follows. Catalyzes the reversible conversion of 2-phosphoglycerate (2-PG) into phosphoenolpyruvate (PEP). It is essential for the degradation of carbohydrates via glycolysis. The protein is Enolase of Streptococcus sanguinis (strain SK36).